The following is a 623-amino-acid chain: Scarecrow-like protein 22 (623 aa).

2 disordered regions span residues Arg-62 to Ala-90 and Pro-179 to Ser-203. The span at Ser-63–Gly-80 shows a compositional bias: low complexity. Residues Asn-235 to Lys-622 enclose the GRAS domain. The segment at Val-242–Ser-311 is leucine repeat I (LRI). Residues Tyr-330–Ala-398 are VHIID. Residues Ile-361–Asp-365 carry the VHIID motif. The leucine repeat II (LRII) stretch occupies residues Phe-413–Ser-448. The segment at Ile-458 to Lys-545 is PFYRE. The tract at residues Thr-548–Lys-622 is SAW.

It belongs to the GRAS family. As to expression, expressed in seedlings, roots, leaves and flowers.

It is found in the nucleus. Functionally, probable transcription factor involved in plant development. The protein is Scarecrow-like protein 22 (SCL22) of Arabidopsis thaliana (Mouse-ear cress).